Consider the following 29-residue polypeptide: GKPICGETCFKGKCYTPGCTCSYPVCKKN.

Residues Gly-1–Asn-29 constitute a cross-link (cyclopeptide (Gly-Asn)). 3 disulfide bridges follow: Cys-5–Cys-19, Cys-9–Cys-21, and Cys-14–Cys-26.

It belongs to the cyclotide family. In terms of processing, this is a cyclic peptide.

Probably participates in a plant defense mechanism. The sequence is that of Cyclotide mden-C from Melicytus dentatus (Tree violet).